The chain runs to 145 residues: Synaptojanin-2-binding protein (145 aa).

Residues 1 to 117 are Cytoplasmic-facing; sequence MNGRVDYLVS…VHRGDGEPSG (117 aa). Residues 13 to 100 enclose the PDZ domain; the sequence is EINLTRGPSG…AVSLRVQHRL (88 aa). The helical transmembrane segment at 118 to 138 threads the bilayer; it reads VPVAVVLLPVFALTLVAVWAF. Topologically, residues 139-145 are mitochondrial intermembrane; it reads VRYRKQL.

Binds (via the PDZ domain) to isoform 2A of SYNJ2 (via the unique motif in the C-terminus). Interacts (via C-terminus) with RALBP1. Interacts (via PDZ domain) with ACVR2A (via C-terminus) and ACVR2B (via C-terminus). Forms a ternary complex with ACVR2A and RALBP1. Interacts with MAPK12. Interacts with DLL1; enhances DLL1 protein stability, and promotes notch signaling in endothelial cells. In terms of tissue distribution, widely expressed.

Its subcellular location is the mitochondrion outer membrane. In terms of biological role, regulates endocytosis of activin type 2 receptor kinases through the Ral/RALBP1-dependent pathway and may be involved in suppression of activin-induced signal transduction. This chain is Synaptojanin-2-binding protein (Synj2bp), found in Rattus norvegicus (Rat).